The sequence spans 221 residues: Large ribosomal subunit protein uL4 (221 aa).

The segment at H56–G83 is disordered.

This sequence belongs to the universal ribosomal protein uL4 family. As to quaternary structure, part of the 50S ribosomal subunit.

Functionally, one of the primary rRNA binding proteins, this protein initially binds near the 5'-end of the 23S rRNA. It is important during the early stages of 50S assembly. It makes multiple contacts with different domains of the 23S rRNA in the assembled 50S subunit and ribosome. In terms of biological role, forms part of the polypeptide exit tunnel. The protein is Large ribosomal subunit protein uL4 of Bifidobacterium adolescentis (strain ATCC 15703 / DSM 20083 / NCTC 11814 / E194a).